The sequence spans 386 residues: Erythronate-4-phosphate dehydrogenase (386 aa).

Residues serine 59 and threonine 81 each coordinate substrate. Aspartate 162 serves as a coordination point for NAD(+). The active site involves arginine 239. Position 262 (aspartate 262) interacts with NAD(+). Residue glutamate 267 is part of the active site. Histidine 284 functions as the Proton donor in the catalytic mechanism. Position 287 (glycine 287) interacts with NAD(+). Residue tyrosine 288 coordinates substrate.

It belongs to the D-isomer specific 2-hydroxyacid dehydrogenase family. PdxB subfamily. As to quaternary structure, homodimer.

It localises to the cytoplasm. The enzyme catalyses 4-phospho-D-erythronate + NAD(+) = (R)-3-hydroxy-2-oxo-4-phosphooxybutanoate + NADH + H(+). It functions in the pathway cofactor biosynthesis; pyridoxine 5'-phosphate biosynthesis; pyridoxine 5'-phosphate from D-erythrose 4-phosphate: step 2/5. Functionally, catalyzes the oxidation of erythronate-4-phosphate to 3-hydroxy-2-oxo-4-phosphonooxybutanoate. The protein is Erythronate-4-phosphate dehydrogenase of Psychrobacter cryohalolentis (strain ATCC BAA-1226 / DSM 17306 / VKM B-2378 / K5).